A 241-amino-acid polypeptide reads, in one-letter code: tRNA (guanine-N(7)-)-methyltransferase (241 aa).

S-adenosyl-L-methionine contacts are provided by Glu-76, Glu-101, Asp-128, and Asp-150. The active site involves Asp-150. Residues Lys-154, Asp-186, and 219–222 (TRYE) contribute to the substrate site.

This sequence belongs to the class I-like SAM-binding methyltransferase superfamily. TrmB family.

It carries out the reaction guanosine(46) in tRNA + S-adenosyl-L-methionine = N(7)-methylguanosine(46) in tRNA + S-adenosyl-L-homocysteine. Its pathway is tRNA modification; N(7)-methylguanine-tRNA biosynthesis. Functionally, catalyzes the formation of N(7)-methylguanine at position 46 (m7G46) in tRNA. This chain is tRNA (guanine-N(7)-)-methyltransferase, found in Cereibacter sphaeroides (strain ATCC 17023 / DSM 158 / JCM 6121 / CCUG 31486 / LMG 2827 / NBRC 12203 / NCIMB 8253 / ATH 2.4.1.) (Rhodobacter sphaeroides).